We begin with the raw amino-acid sequence, 1209 residues long: DNA-directed RNA polymerase subunit beta'' (1209 aa).

The Zn(2+) site is built by Cys-233, Cys-308, Cys-315, and Cys-318.

It belongs to the RNA polymerase beta' chain family. RpoC2 subfamily. In plastids the minimal PEP RNA polymerase catalytic core is composed of four subunits: alpha, beta, beta', and beta''. When a (nuclear-encoded) sigma factor is associated with the core the holoenzyme is formed, which can initiate transcription. The cofactor is Zn(2+).

It is found in the plastid. The protein resides in the chloroplast. The enzyme catalyses RNA(n) + a ribonucleoside 5'-triphosphate = RNA(n+1) + diphosphate. In terms of biological role, DNA-dependent RNA polymerase catalyzes the transcription of DNA into RNA using the four ribonucleoside triphosphates as substrates. This Pinus koraiensis (Korean pine) protein is DNA-directed RNA polymerase subunit beta''.